The primary structure comprises 197 residues: 3-isopropylmalate dehydratase small subunit (197 aa).

Belongs to the LeuD family. LeuD type 1 subfamily. As to quaternary structure, heterodimer of LeuC and LeuD.

The enzyme catalyses (2R,3S)-3-isopropylmalate = (2S)-2-isopropylmalate. It participates in amino-acid biosynthesis; L-leucine biosynthesis; L-leucine from 3-methyl-2-oxobutanoate: step 2/4. In terms of biological role, catalyzes the isomerization between 2-isopropylmalate and 3-isopropylmalate, via the formation of 2-isopropylmaleate. The polypeptide is 3-isopropylmalate dehydratase small subunit (Mycobacterium sp. (strain JLS)).